The sequence spans 647 residues: Leishmanolysin-like peptidase (647 aa).

Histidine 264 lines the Zn(2+) pocket. The active site involves glutamate 265. The Zn(2+) site is built by histidine 268 and histidine 370.

The protein belongs to the peptidase M8 family. Zn(2+) is required as a cofactor. Expressed in all cell lines analyzed.

It is found in the cytoplasm. The protein localises to the lipid droplet. In terms of biological role, metalloprotease. This is Leishmanolysin-like peptidase (LMLN) from Homo sapiens (Human).